The sequence spans 199 residues: Recombination protein RecR (199 aa).

Residues Cys56–Cys71 form a C4-type zinc finger. The Toprim domain maps to Ser79–Pro174.

It belongs to the RecR family.

Functionally, may play a role in DNA repair. It seems to be involved in an RecBC-independent recombinational process of DNA repair. It may act with RecF and RecO. This chain is Recombination protein RecR, found in Frankia casuarinae (strain DSM 45818 / CECT 9043 / HFP020203 / CcI3).